A 352-amino-acid polypeptide reads, in one-letter code: Inner membrane protein YeeA (352 aa).

The Cytoplasmic segment spans residues 1–25 (MRADKSLSPFEIRVYRHYRIVHGTR). The next 2 helical transmembrane spans lie at 26 to 46 (VALA…PEST) and 47 to 67 (WPLV…NVVP). Position 68 (arginine 68) is a topological domain, cytoplasmic. Residues 69-89 (AFERIGGTVLGSILGLIALQL) traverse the membrane as a helical segment. Glutamate 90 is a topological domain (periplasmic). The chain crosses the membrane as a helical span at residues 91-111 (LISLPLMLVWCAAAMFLCGWL). Over 112–117 (ALGKKP) the chain is Cytoplasmic. A helical transmembrane segment spans residues 118–138 (YQGLLIGVTLAIVVGSPTGEI). Topologically, residues 139 to 147 (DTALWRSGD) are periplasmic. The helical transmembrane segment at 148-168 (VILGSLLAMLFTGIWPQRAFI) threads the bilayer. At 169-352 (HWRIQLAKSL…SNLICRALRK (184 aa)) the chain is on the cytoplasmic side.

It is found in the cell inner membrane. The polypeptide is Inner membrane protein YeeA (yeeA) (Escherichia coli (strain K12)).